We begin with the raw amino-acid sequence, 112 residues long: Large ribosomal subunit protein uL22 (112 aa).

This sequence belongs to the universal ribosomal protein uL22 family. Part of the 50S ribosomal subunit.

This protein binds specifically to 23S rRNA; its binding is stimulated by other ribosomal proteins, e.g. L4, L17, and L20. It is important during the early stages of 50S assembly. It makes multiple contacts with different domains of the 23S rRNA in the assembled 50S subunit and ribosome. In terms of biological role, the globular domain of the protein is located near the polypeptide exit tunnel on the outside of the subunit, while an extended beta-hairpin is found that lines the wall of the exit tunnel in the center of the 70S ribosome. This chain is Large ribosomal subunit protein uL22, found in Moorella thermoacetica (strain ATCC 39073 / JCM 9320).